The chain runs to 565 residues: Mediator of RNA polymerase II transcription subunit 17 (565 aa).

The segment covering 138–152 (TSLNSDRLGQDSNDN) has biased composition (polar residues). Residues 138–160 (TSLNSDRLGQDSNDNQESKATDS) are disordered.

The protein belongs to the Mediator complex subunit 17 family. As to quaternary structure, component of the Mediator complex.

The protein localises to the nucleus. Component of the Mediator complex, a coactivator involved in the regulated transcription of nearly all RNA polymerase II-dependent genes. Mediator functions as a bridge to convey information from gene-specific regulatory proteins to the basal RNA polymerase II transcription machinery. Mediator is recruited to promoters by direct interactions with regulatory proteins and serves as a scaffold for the assembly of a functional preinitiation complex with RNA polymerase II and the general transcription factors. The protein is Mediator of RNA polymerase II transcription subunit 17 (SRB4) of Candida albicans (strain SC5314 / ATCC MYA-2876) (Yeast).